A 725-amino-acid polypeptide reads, in one-letter code: Polyribonucleotide nucleotidyltransferase (725 aa).

Residues D487 and D493 each contribute to the Mg(2+) site. Positions 554-613 (PRIETMQIPTDKIREVIGTGGKVIREIVEKTGAKIDIQDTGVIKIASSDAKAIKAAYNWI) constitute a KH domain. The 69-residue stretch at 623–691 (GMIYDGTVVK…ERGKIRLSMK (69 aa)) folds into the S1 motif domain. Positions 697–725 (TGEDITEKLKAEREADRNRERQARQSAGE) are disordered. Basic and acidic residues predominate over residues 701 to 719 (ITEKLKAEREADRNRERQA).

It belongs to the polyribonucleotide nucleotidyltransferase family. Mg(2+) serves as cofactor.

It localises to the cytoplasm. It catalyses the reaction RNA(n+1) + phosphate = RNA(n) + a ribonucleoside 5'-diphosphate. Its function is as follows. Involved in mRNA degradation. Catalyzes the phosphorolysis of single-stranded polyribonucleotides processively in the 3'- to 5'-direction. The sequence is that of Polyribonucleotide nucleotidyltransferase from Methylobacterium nodulans (strain LMG 21967 / CNCM I-2342 / ORS 2060).